The following is a 179-amino-acid chain: Large ribosomal subunit protein uL6 (179 aa).

This sequence belongs to the universal ribosomal protein uL6 family. In terms of assembly, part of the 50S ribosomal subunit.

Its function is as follows. This protein binds to the 23S rRNA, and is important in its secondary structure. It is located near the subunit interface in the base of the L7/L12 stalk, and near the tRNA binding site of the peptidyltransferase center. In Bifidobacterium longum (strain DJO10A), this protein is Large ribosomal subunit protein uL6.